The following is a 310-amino-acid chain: Aspartate carbamoyltransferase catalytic subunit (310 aa).

2 residues coordinate carbamoyl phosphate: arginine 58 and threonine 59. Lysine 86 provides a ligand contact to L-aspartate. 3 residues coordinate carbamoyl phosphate: arginine 108, histidine 136, and glutamine 139. L-aspartate contacts are provided by arginine 169 and arginine 224. The carbamoyl phosphate site is built by glycine 265 and proline 266.

It belongs to the aspartate/ornithine carbamoyltransferase superfamily. ATCase family. As to quaternary structure, heterododecamer (2C3:3R2) of six catalytic PyrB chains organized as two trimers (C3), and six regulatory PyrI chains organized as three dimers (R2).

It catalyses the reaction carbamoyl phosphate + L-aspartate = N-carbamoyl-L-aspartate + phosphate + H(+). It functions in the pathway pyrimidine metabolism; UMP biosynthesis via de novo pathway; (S)-dihydroorotate from bicarbonate: step 2/3. Catalyzes the condensation of carbamoyl phosphate and aspartate to form carbamoyl aspartate and inorganic phosphate, the committed step in the de novo pyrimidine nucleotide biosynthesis pathway. This Trichlorobacter lovleyi (strain ATCC BAA-1151 / DSM 17278 / SZ) (Geobacter lovleyi) protein is Aspartate carbamoyltransferase catalytic subunit.